The chain runs to 799 residues: Putative aconitate hydratase, mitochondrial (799 aa).

A mitochondrion-targeting transit peptide spans 1–32 (MVRQLVWQRATASRRLAPKCLSPQQLFARRGL). Residues glutamine 108 and 201 to 203 (DSH) contribute to the substrate site. 3 residues coordinate [4Fe-4S] cluster: cysteine 399, cysteine 462, and cysteine 465. Substrate is bound by residues arginine 489 and arginine 494. A disordered region spans residues 538–564 (KFRPPQGSDLPSAGFADGNPALQPSAG). 685–686 (AR) is a substrate binding site.

Belongs to the aconitase/IPM isomerase family.

The protein resides in the mitochondrion. In terms of biological role, has no detectable activity towards cis-acontiate or cis-homoaconitate. The polypeptide is Putative aconitate hydratase, mitochondrial (acoB) (Aspergillus fumigatus (strain ATCC MYA-4609 / CBS 101355 / FGSC A1100 / Af293) (Neosartorya fumigata)).